Consider the following 349-residue polypeptide: Cobalt-precorrin-5B C(1)-methyltransferase (349 aa).

This sequence belongs to the CbiD family.

The enzyme catalyses Co-precorrin-5B + S-adenosyl-L-methionine = Co-precorrin-6A + S-adenosyl-L-homocysteine. It functions in the pathway cofactor biosynthesis; adenosylcobalamin biosynthesis; cob(II)yrinate a,c-diamide from sirohydrochlorin (anaerobic route): step 6/10. Catalyzes the methylation of C-1 in cobalt-precorrin-5B to form cobalt-precorrin-6A. In Saccharolobus islandicus (strain Y.N.15.51 / Yellowstone #2) (Sulfolobus islandicus), this protein is Cobalt-precorrin-5B C(1)-methyltransferase.